We begin with the raw amino-acid sequence, 555 residues long: Protein NRT1/ PTR FAMILY 5.12 (555 aa).

The next 2 membrane-spanning stretches (helical) occupy residues 53-73 (FAYF…LGES) and 83-103 (LWLG…DSFL). At Thr-108 the chain carries Phosphothreonine. 10 helical membrane-spanning segments follow: residues 109–129 (ILLT…SATI), 148–168 (VIIF…FKVC), 190–210 (SYFN…RLVT), 221–241 (LGYA…LLGI), 315–335 (AVLS…VFAQ), 357–377 (VPAA…IPIY), 401–421 (ISTG…VEMK), 443–463 (VCWL…TMVG), 482–502 (ALYL…VSVI), and 526–546 (YFYW…VYFA).

This sequence belongs to the major facilitator superfamily. Proton-dependent oligopeptide transporter (POT/PTR) (TC 2.A.17) family. In terms of tissue distribution, expressed in shoots and roots.

Its subcellular location is the membrane. In Arabidopsis thaliana (Mouse-ear cress), this protein is Protein NRT1/ PTR FAMILY 5.12 (NPF5.12).